The chain runs to 175 residues: MVRKIITYPNPRLFLNSEIVNKFDTELHTLLDDMYETMIASNGVGLAAIQVDIPLRVLLVNIFDENDEQKKEDLLEIINPEIIPLDEEMITCTEGCLSVPDFFEEVKRYNHILLKYQDRFGEFKELEAKGFLAVAIQHENDHLNGHLFIEKISFAKRQKFDKEFKKKKKNHKKEK.

The Fe cation site is built by C96 and H138. Residue E139 is part of the active site. H142 lines the Fe cation pocket.

It belongs to the polypeptide deformylase family. Fe(2+) serves as cofactor.

The enzyme catalyses N-terminal N-formyl-L-methionyl-[peptide] + H2O = N-terminal L-methionyl-[peptide] + formate. Functionally, removes the formyl group from the N-terminal Met of newly synthesized proteins. Requires at least a dipeptide for an efficient rate of reaction. N-terminal L-methionine is a prerequisite for activity but the enzyme has broad specificity at other positions. This chain is Peptide deformylase, found in Campylobacter jejuni subsp. jejuni serotype O:2 (strain ATCC 700819 / NCTC 11168).